We begin with the raw amino-acid sequence, 74 residues long: Antimicrobial peptide HsAp2 (74 aa).

A signal peptide spans 1–21 (MSRRLILILVLVAMLVKTMAG). The propeptide occupies 22–33 (MESKWVETTYEI). Residue Pro-65 is modified to Proline amide. The propeptide occupies 69–74 (AISEQT).

The protein belongs to the non-disulfide-bridged peptide (NDBP) superfamily. Medium-length antimicrobial peptide (group 3) family. In terms of tissue distribution, expressed by the venom gland.

The protein localises to the secreted. The protein resides in the target cell membrane. In terms of biological role, possesses antimicrobial activity against both Gram-negative and Gram-positive bacteria, as well as against the fungus C.tropicalis. Also possesses a relatively high hemolytic activity. May act by disrupting the integrity of the bacterial cell membrane. The protein is Antimicrobial peptide HsAp2 of Heterometrus spinifer (Asia giant forest scorpion).